The primary structure comprises 76 residues: Protein krueppel (76 aa).

C2H2-type zinc fingers lie at residues 11–33 (FECSECHKRFTRDHHLKTHLRLH) and 39–61 (YSCPHCPRHFVQVANLRRHLRVH).

It belongs to the krueppel C2H2-type zinc-finger protein family.

The protein localises to the nucleus. Functionally, krueppel is a gap class segmentation protein. The protein is Protein krueppel (Kr) of Manduca sexta (Tobacco hawkmoth).